The chain runs to 253 residues: Triosephosphate isomerase (253 aa).

8–10 is a substrate binding site; it reads NWK. His-93 serves as the catalytic Electrophile. The Proton acceptor role is filled by Glu-165. Residues Gly-171, Ser-210, and 231–232 each bind substrate; that span reads GG.

It belongs to the triosephosphate isomerase family. In terms of assembly, homodimer.

It localises to the cytoplasm. The catalysed reaction is D-glyceraldehyde 3-phosphate = dihydroxyacetone phosphate. The protein operates within carbohydrate biosynthesis; gluconeogenesis. It functions in the pathway carbohydrate degradation; glycolysis; D-glyceraldehyde 3-phosphate from glycerone phosphate: step 1/1. Involved in the gluconeogenesis. Catalyzes stereospecifically the conversion of dihydroxyacetone phosphate (DHAP) to D-glyceraldehyde-3-phosphate (G3P). The polypeptide is Triosephosphate isomerase (Francisella tularensis subsp. mediasiatica (strain FSC147)).